Here is a 308-residue protein sequence, read N- to C-terminus: Dipeptide transport system permease protein DppB (308 aa).

A run of 7 helical transmembrane segments spans residues 10-30 (WAMAATILVITTLTFVLMKVI), 59-79 (LIFQYIFYLKSIITFDFGPSI), 100-120 (LGMTAIVIAVISGLVLGVIAA), 131-151 (AMSLAVLGISIPNFILATLLI), 168-188 (SPIHMVLPTAALAVGPMAIIA), 228-248 (MPVITVLGTLVASILTGSFVI), and 278-298 (VFYSVILIIMLFLVDLAYGLL). The 202-residue stretch at 94 to 295 (FPVSFELGMT…IMLFLVDLAY (202 aa)) folds into the ABC transmembrane type-1 domain.

It belongs to the binding-protein-dependent transport system permease family. OppBC subfamily.

It localises to the cell membrane. In terms of biological role, probably part of the ABC transporter DppBCDE involved in dipeptide transport. Responsible for the translocation of the substrate across the membrane. The polypeptide is Dipeptide transport system permease protein DppB (dppB) (Bacillus subtilis (strain 168)).